The primary structure comprises 40 residues: Snaclec LmrLEC-1 (40 aa).

Residues cysteine 2 and cysteine 13 are joined by a disulfide bond.

Belongs to the snaclec family. As to quaternary structure, dimer (non-covalently linked) of heterodimers of subunits alpha and beta (disulfide-linked). As to expression, expressed by the venom gland.

Its subcellular location is the secreted. Functionally, interferes with one step of hemostasis (modulation of platelet aggregation, or coagulation cascade, for example). The protein is Snaclec LmrLEC-1 of Lachesis muta rhombeata (Bushmaster).